A 68-amino-acid chain; its full sequence is Protein SlyX homolog (68 aa).

Belongs to the SlyX family.

The polypeptide is Protein SlyX homolog (Pseudomonas fluorescens (strain Pf0-1)).